A 609-amino-acid polypeptide reads, in one-letter code: Pescadillo homolog (609 aa).

Positions Lys320–Ile413 constitute a BRCT domain. Disordered stretches follow at residues Asp443–Phe462 and Ala488–Ala609. Basic and acidic residues-rich tracts occupy residues Glu444 to Gly453 and Ala488 to Gln498. Residues Phe481–Glu509 adopt a coiled-coil conformation. Residues Ala499–Gln512 show a composition bias toward acidic residues. Basic and acidic residues-rich tracts occupy residues Asp513–Gln524 and Val533–Arg552. Residues Lys539–Ile607 adopt a coiled-coil conformation. Residues Lys554–Tyr564 are compositionally biased toward basic residues. The segment covering Leu567–Ala609 has biased composition (basic and acidic residues).

The protein belongs to the pescadillo family.

The protein resides in the nucleus. It localises to the nucleolus. Its subcellular location is the nucleoplasm. Functionally, required for maturation of ribosomal RNAs and formation of the large ribosomal subunit. This chain is Pescadillo homolog, found in Aedes aegypti (Yellowfever mosquito).